The following is a 237-amino-acid chain: Fluoroquinolones export permease protein MT2761 (237 aa).

6 consecutive transmembrane segments (helical) span residues 20–40 (FLHA…PMPV), 49–69 (YVLV…TVFF), 96–116 (VLLA…HGLG), 119–139 (LLPL…VGFS), 147–167 (VTDW…PPVV), and 199–219 (LAPW…AGLC).

In terms of assembly, the complex is composed of 2 ATP-binding proteins and 2 transmembrane proteins.

The protein resides in the cell membrane. In terms of biological role, part of the ABC transporter complex involved in fluoroquinolones export. Probably responsible for the translocation of the substrate across the membrane. This chain is Fluoroquinolones export permease protein MT2761, found in Mycobacterium tuberculosis (strain CDC 1551 / Oshkosh).